The primary structure comprises 215 residues: Large ribosomal subunit protein mL43 (215 aa).

The protein belongs to the mitochondrion-specific ribosomal protein mL43 family. Component of the mitochondrial large ribosomal subunit (mt-LSU). Mature mammalian 55S mitochondrial ribosomes consist of a small (28S) and a large (39S) subunit. The 28S small subunit contains a 12S ribosomal RNA (12S mt-rRNA) and 30 different proteins. The 39S large subunit contains a 16S rRNA (16S mt-rRNA), a copy of mitochondrial valine transfer RNA (mt-tRNA(Val)), which plays an integral structural role, and 52 different proteins. As to expression, high relative levels in skeletal muscle and testis. Lower levels of expression in the heart, brain, placenta, lung, liver, kidney, pancreas, spleen, thymus, prostate, ovary, small intestine, colon and leukocytes. Expression is coregulated with TWNK.

The protein localises to the mitochondrion. This Homo sapiens (Human) protein is Large ribosomal subunit protein mL43 (MRPL43).